We begin with the raw amino-acid sequence, 430 residues long: Protein arginine methyltransferase NDUFAF7, mitochondrial (430 aa).

A mitochondrion-targeting transit peptide spans 1–31; sequence MSGLARLRKTAFLMVSASANCRIQRYQSSRT.

This sequence belongs to the NDUFAF7 family.

It localises to the mitochondrion. The catalysed reaction is L-arginyl-[protein] + 2 S-adenosyl-L-methionine = N(omega),N(omega)'-dimethyl-L-arginyl-[protein] + 2 S-adenosyl-L-homocysteine + 2 H(+). Its function is as follows. Arginine methyltransferase involved in the assembly or stability of mitochondrial NADH:ubiquinone oxidoreductase complex (complex I). Acts by mediating symmetric dimethylation of 'Arg-118' of ndufs2 after it assembles into the complex I, stabilizing the early intermediate complex. The sequence is that of Protein arginine methyltransferase NDUFAF7, mitochondrial from Xenopus tropicalis (Western clawed frog).